The primary structure comprises 403 residues: Phosphopentomutase (403 aa).

6 residues coordinate Mn(2+): aspartate 13, aspartate 298, histidine 303, aspartate 339, histidine 340, and histidine 351.

It belongs to the phosphopentomutase family. Requires Mn(2+) as cofactor.

It localises to the cytoplasm. It carries out the reaction 2-deoxy-alpha-D-ribose 1-phosphate = 2-deoxy-D-ribose 5-phosphate. The enzyme catalyses alpha-D-ribose 1-phosphate = D-ribose 5-phosphate. It participates in carbohydrate degradation; 2-deoxy-D-ribose 1-phosphate degradation; D-glyceraldehyde 3-phosphate and acetaldehyde from 2-deoxy-alpha-D-ribose 1-phosphate: step 1/2. In terms of biological role, isomerase that catalyzes the conversion of deoxy-ribose 1-phosphate (dRib-1-P) and ribose 1-phosphate (Rib-1-P) to deoxy-ribose 5-phosphate (dRib-5-P) and ribose 5-phosphate (Rib-5-P), respectively. The chain is Phosphopentomutase from Streptococcus pyogenes serotype M5 (strain Manfredo).